We begin with the raw amino-acid sequence, 229 residues long: Interleukin-27 subunit beta (229 aa).

The signal sequence occupies residues 1 to 20; that stretch reads MTPQLLLALVLWASCPPCSG. 2 consecutive Fibronectin type-III domains span residues 24-130 and 131-227; these read PPAA…IKPD and PPEG…TMSL. Asparagine 55 and asparagine 105 each carry an N-linked (GlcNAc...) asparagine glycan.

The protein belongs to the type I cytokine receptor family. Type 3 subfamily. Heterodimer with IL27/IL27A; not disulfide-linked. This heterodimer is known as interleukin IL-27. Heterodimer with IL12A; not disulfide-linked. This heterodimer is known as interleukin IL-35. Interacts with SQSTM1.

It is found in the secreted. Its function is as follows. Associates with IL27 to form the IL-27 interleukin, a heterodimeric cytokine which functions in innate immunity. IL-27 has pro- and anti-inflammatory properties, that can regulate T-helper cell development, suppress T-cell proliferation, stimulate cytotoxic T-cell activity, induce isotype switching in B-cells, and that has diverse effects on innate immune cells. Among its target cells are CD4 T-helper cells which can differentiate in type 1 effector cells (TH1), type 2 effector cells (TH2) and IL17 producing helper T-cells (TH17). It drives rapid clonal expansion of naive but not memory CD4 T-cells. It also strongly synergizes with IL-12 to trigger interferon-gamma/IFN-gamma production of naive CD4 T-cells, binds to the cytokine receptor WSX-1/TCCR. Another important role of IL-27 is its antitumor activity as well as its antiangiogenic activity with activation of production of antiangiogenic chemokines. The polypeptide is Interleukin-27 subunit beta (EBI3) (Homo sapiens (Human)).